A 215-amino-acid chain; its full sequence is Leucyl/phenylalanyl-tRNA--protein transferase (215 aa).

The protein belongs to the L/F-transferase family.

It localises to the cytoplasm. The catalysed reaction is N-terminal L-lysyl-[protein] + L-leucyl-tRNA(Leu) = N-terminal L-leucyl-L-lysyl-[protein] + tRNA(Leu) + H(+). The enzyme catalyses N-terminal L-arginyl-[protein] + L-leucyl-tRNA(Leu) = N-terminal L-leucyl-L-arginyl-[protein] + tRNA(Leu) + H(+). It carries out the reaction L-phenylalanyl-tRNA(Phe) + an N-terminal L-alpha-aminoacyl-[protein] = an N-terminal L-phenylalanyl-L-alpha-aminoacyl-[protein] + tRNA(Phe). Functionally, functions in the N-end rule pathway of protein degradation where it conjugates Leu, Phe and, less efficiently, Met from aminoacyl-tRNAs to the N-termini of proteins containing an N-terminal arginine or lysine. The protein is Leucyl/phenylalanyl-tRNA--protein transferase of Campylobacter jejuni (strain RM1221).